Here is a 363-residue protein sequence, read N- to C-terminus: Protein RecA (363 aa).

Gly77–Thr84 is a binding site for ATP.

It belongs to the RecA family.

The protein resides in the cytoplasm. Its function is as follows. Can catalyze the hydrolysis of ATP in the presence of single-stranded DNA, the ATP-dependent uptake of single-stranded DNA by duplex DNA, and the ATP-dependent hybridization of homologous single-stranded DNAs. It interacts with LexA causing its activation and leading to its autocatalytic cleavage. The protein is Protein RecA of Agrobacterium fabrum (strain C58 / ATCC 33970) (Agrobacterium tumefaciens (strain C58)).